Reading from the N-terminus, the 215-residue chain is Beta-crystallin A3-2 (215 aa).

The segment at M1–P30 is N-terminal arm. Beta/gamma crystallin 'Greek key' domains lie at W31–C70 and G71–C117. The segment at S118–E123 is connecting peptide. Beta/gamma crystallin 'Greek key' domains lie at S124–C165 and G166–Q214.

It belongs to the beta/gamma-crystallin family. Homo/heterodimer, or complexes of higher-order. The structure of beta-crystallin oligomers seems to be stabilized through interactions between the N-terminal arms. The N-terminus is blocked.

Its function is as follows. Crystallins are the dominant structural components of the vertebrate eye lens. The chain is Beta-crystallin A3-2 from Aquarana catesbeiana (American bullfrog).